The sequence spans 1775 residues: Stereocilin (1775 aa).

The signal sequence occupies residues 1–22 (MALSLWPLLLLLLLLLLLSFAV). Asn65, Asn202, Asn297, Asn366, Asn427, Asn476, Asn540, Asn565, Asn656, Asn824, Asn916, Asn964, Asn1179, and Asn1274 each carry an N-linked (GlcNAc...) asparagine glycan.

Belongs to the stereocilin family.

It is found in the cell surface. It localises to the cell projection. The protein localises to the kinocilium. The protein resides in the stereocilium. Functionally, essential to the formation of horizontal top connectors between outer hair cell stereocilia. This is Stereocilin (STRC) from Homo sapiens (Human).